The primary structure comprises 475 residues: GDP-fucose protein O-fucosyltransferase 3 (475 aa).

The Cytoplasmic segment spans residues 1-8 (MVRMRRKR). Residues 9 to 29 (LWASCICFAAFFFLLVTLQVI) form a helical; Signal-anchor for type II membrane protein membrane-spanning segment. Topologically, residues 30–475 (TELGNSENKA…QEFWMLVFKQ (446 aa)) are lumenal. N-linked (GlcNAc...) asparagine glycans are attached at residues Asn107, Asn165, and Asn315. Cys386 and Cys389 are joined by a disulfide. N-linked (GlcNAc...) asparagine glycosylation occurs at Asn462.

This sequence belongs to the glycosyltransferase 10 family.

Its subcellular location is the endoplasmic reticulum membrane. It carries out the reaction L-threonyl-[protein] + GDP-beta-L-fucose = 3-O-(alpha-L-fucosyl)-L-threonyl-[protein] + GDP + H(+). It catalyses the reaction L-seryl-[protein] + GDP-beta-L-fucose = 3-O-(alpha-L-fucosyl)-L-seryl-[protein] + GDP + H(+). It participates in protein modification; protein glycosylation. In terms of biological role, protein O-fucosyltransferase that specifically catalyzes O-fucosylation of serine or threonine residues in EMI domains of target proteins. Attaches fucose through an O-glycosidic linkage. O-fucosylation of EMI domain-containing proteins may be required for facilitating protein folding and secretion. The polypeptide is GDP-fucose protein O-fucosyltransferase 3 (FUT10) (Gallus gallus (Chicken)).